We begin with the raw amino-acid sequence, 602 residues long: MDSQPPVNESTPSTALSNFGELVPFYSSYLWNRLASLLPTSKPIFLGKISNLYRQTVSRKRSISFPLPLPSDFPSSSTITSNVSADTARIHGVLEEIMADVLSNLHDIQKSLDFWRSRAEGSNARKAYFMIFERGPTAFVNESTKFVSKSLSEDSAMQHLCQSSSSHMTERMRVLVELRSALASFIAQLYVELDKRGEDLVKIPEKALPSLLAVINGLFSNLEGSFSHLHAVRECDSSVDGSYPMPLVFDRLPEVNEEGSQWTDCELTDAINLVHKNLEKLNSYLSVMVGKHRKPRRMTLYWVRYTCGAVGLSVFSIWLLRHSSLMGSSDIENWVHDAKEATMSFFSDHVEQPLLSIRDELFDTFRKRHKGVMETEEVQLTQDSLHRMLRNFCEQATREKVPDNASDQEMLEVVMNRYEKELVHPIHNLLSGELARGLLIQVQKLKLDIETAMLELDQILRANEINFAILAALPAFFLSIVMLTVLRTWLKKDSKAQGRGRIARIHRRLLVVEIEKRIMQYQSYIEQGRDKDAETVFGLLIYSLERLYRVVEKPARATDEWDLVKQDLIELGRPQQQTSYKLTVTQRLVTVYDCLLPTLKRQ.

2 consecutive transmembrane segments (helical) span residues 300-320 (LYWV…IWLL) and 465-485 (INFA…MLTV).

Component of a mitochondrial large protein complex that contains, at least, MIC60, DGS1, TOM40 (e.g. TOM40-1), TOM20 proteins (e.g. TOM20-2), and petC/RISP.

The protein localises to the mitochondrion outer membrane. Functionally, involved in galactoglycerolipid biosynthesis. Contributes to an intracellular signal that regulates an alternative DGD1-independent galactoglycerolipid biosynthesis pathway in chloroplasts. Being involved in mitochondrial lipid homeostasis, modulates mitochondrion biogenesis and physiology, as well as stress responses. This chain is Protein DGS1, mitochondrial, found in Arabidopsis thaliana (Mouse-ear cress).